We begin with the raw amino-acid sequence, 258 residues long: GPI alpha-1,4-mannosyltransferase I, stabilizing subunit (258 aa).

The first 21 residues, 1 to 21 (MAARVAAVRAAAWLLLGAATG), serve as a signal peptide directing secretion. Residues 22 to 230 (LTRGPAAAFT…PVGLTVHTSL (209 aa)) lie on the Lumenal side of the membrane. An N-linked (GlcNAc...) asparagine glycan is attached at Asn103. The chain crosses the membrane as a helical span at residues 231–251 (VCSVTLLITILCSTLILVAVF). Residues 252–258 (KYGHFSL) are Cytoplasmic-facing.

It belongs to the PIGX family. Part of the glycosylphosphatidylinositol-mannosyltransferase I complex that is composed of PIGM and PIGX. Interacts with PIGM; PIGX stabilizes PIGM.

Its subcellular location is the endoplasmic reticulum membrane. The protein operates within glycolipid biosynthesis; glycosylphosphatidylinositol-anchor biosynthesis. Its function is as follows. Stabilizing subunit of the glycosylphosphatidylinositol-mannosyltransferase I complex which catalyzes the transfer of the first mannose, via an alpha-1,4 bond from a dolichol-phosphate-mannose (Dol-P-Man) to the glucosaminyl acyl phosphatidylinositol (GlcN-(acyl)PI) intermediate to generate alpha-D-Man-(1-&gt;4)-alpha-D-GlcN-(1-&gt;6)-(1-radyl,2-acyl-sn-glycero-3-phospho)-2-acyl-inositol and participates in the sixth step of the glycosylphosphatidylinositol-anchor biosynthesis. Probably acts by stabilizing the mannosyltransferase PIGM. This Homo sapiens (Human) protein is GPI alpha-1,4-mannosyltransferase I, stabilizing subunit.